The chain runs to 718 residues: MSTEGSAVETLTIEEAAAELERLAREIAHHDALYHGKDQPEISDADYDALKRRNDALEARFPELIREDSPSRRVGAAPSVTFSPVVHARPMLSLDNTFSQEDVQDFVASVYRFLGRMPDQSIAFTAEPKIDGLSMSIRYENGRLTTAATRGDGTTGENVTANIRTIAEIPNQLPKGVPAVVEIRGEVYMAKSDFLALNRQMEAEGKQTYVNPRNTAAGSLRQLDAKVTASRKLKFFAYAWGEMSDMPADTQFAMVQTFKDWGFPVNPLMKRLNSVADILAHYDEIGLKRPDLDYDIDGVVYKVDSLELQQRLGFRSRSPRWATAHKFPAEQAFTEVEKIEIQVGRTGALTPVARLKPITVGGVVVTNATLHNEDYIKGIGNSGERIRPEEHDIREGDTVIVQRAGDVIPQILDVVMEKRLAEVKPYEFPKICPVCGSHAVREVNEKTGKMDSVRRCTGGFICRAQATEHLKHFVSRNAFDIEGLGSKQIDFFFENEDPSLQIRTAPEIFTLEKRQQDSLTKLENIDGFGKVSVGKLYAAINERRSIALHRFIYALGIRHVGETTAKLLARSYGTYEAFATAMKEAAPLSGDAWNDLNAIEGIGEVVARAMVEFYKEPRNVEVIGRLLDEVTPAEAEQPVTAGSPVAGKTVVFTGSLEKFTRDEAKARAESLGAKVAGSVSKKTDIVVAGPGAGSKLDKARELGVQTMDEDEWLALISG.

Residues 44–48 (DADYD), 93–94 (SL), and glutamate 127 each bind NAD(+). The active-site N6-AMP-lysine intermediate is the lysine 129. NAD(+) contacts are provided by arginine 150, glutamate 186, lysine 302, and lysine 326. Cysteine 432, cysteine 435, cysteine 456, and cysteine 462 together coordinate Zn(2+). Positions 640 to 718 (TAGSPVAGKT…EDEWLALISG (79 aa)) constitute a BRCT domain.

The protein belongs to the NAD-dependent DNA ligase family. LigA subfamily. Mg(2+) is required as a cofactor. Mn(2+) serves as cofactor.

It carries out the reaction NAD(+) + (deoxyribonucleotide)n-3'-hydroxyl + 5'-phospho-(deoxyribonucleotide)m = (deoxyribonucleotide)n+m + AMP + beta-nicotinamide D-nucleotide.. In terms of biological role, DNA ligase that catalyzes the formation of phosphodiester linkages between 5'-phosphoryl and 3'-hydroxyl groups in double-stranded DNA using NAD as a coenzyme and as the energy source for the reaction. It is essential for DNA replication and repair of damaged DNA. This chain is DNA ligase, found in Rhizobium etli (strain ATCC 51251 / DSM 11541 / JCM 21823 / NBRC 15573 / CFN 42).